The sequence spans 501 residues: Probable malate:quinone oxidoreductase (501 aa).

The protein belongs to the MQO family. The cofactor is FAD.

It carries out the reaction (S)-malate + a quinone = a quinol + oxaloacetate. It functions in the pathway carbohydrate metabolism; tricarboxylic acid cycle; oxaloacetate from (S)-malate (quinone route): step 1/1. The protein is Probable malate:quinone oxidoreductase of Paenarthrobacter aurescens (strain TC1).